We begin with the raw amino-acid sequence, 523 residues long: Protein disulfide-isomerase (523 aa).

A signal peptide spans 1–22 (MPGVRSLLLALAGVSLAPAVLA). The Thioredoxin 1 domain maps to 24–137 (DASTDSSDVH…TSYMIKQSLP (114 aa)). Active-site nucleophile residues include Cys-59 and Cys-62. Cys-59 and Cys-62 are disulfide-bonded. An N-linked (GlcNAc...) asparagine glycan is attached at Asn-170. The 132-residue stretch at 344–475 (VIAGDIAPSV…LANFVRDNGK (132 aa)) folds into the Thioredoxin 2 domain. Residues Cys-394 and Cys-397 are joined by a disulfide bond. 2 stretches are compositionally biased toward basic and acidic residues: residues 478 to 502 (VDAYDEKKVEKDGSDVTGKPKDAEA) and 512 to 523 (SEEKADKEHEEL). The tract at residues 478 to 523 (VDAYDEKKVEKDGSDVTGKPKDAEAPPKPSDAPESEEKADKEHEEL) is disordered. The Prevents secretion from ER signature appears at 520 to 523 (HEEL).

It belongs to the protein disulfide isomerase family.

It localises to the endoplasmic reticulum lumen. It carries out the reaction Catalyzes the rearrangement of -S-S- bonds in proteins.. In terms of biological role, participates in the folding of proteins containing disulfide bonds, may be involved in glycosylation, prolyl hydroxylation and triglyceride transfer. The sequence is that of Protein disulfide-isomerase from Arthroderma benhamiae (strain ATCC MYA-4681 / CBS 112371) (Trichophyton mentagrophytes).